Consider the following 195-residue polypeptide: PE-PGRS family protein PE_PGRS61 (195 aa).

Belongs to the mycobacterial PE family. PGRS subfamily. Interacts with human TLR2.

Its subcellular location is the secreted. The protein localises to the cell wall. It is found in the cell surface. With respect to regulation, binding of Ca(2+) to PE_PGRS61 induces conformational changes and increases affinity for TLR2. Its function is as follows. Mediates Ca(2+)-dependent up-regulation of the anti-inflammatory cytokine IL-10. The sequence is that of PE-PGRS family protein PE_PGRS61 from Mycobacterium tuberculosis (strain ATCC 25618 / H37Rv).